Consider the following 107-residue polypeptide: Small ribosomal subunit protein uS10m (107 aa).

It belongs to the universal ribosomal protein uS10 family.

The protein localises to the mitochondrion. This is Small ribosomal subunit protein uS10m (RPS10) from Prototheca wickerhamii.